Consider the following 462-residue polypeptide: L-seryl-tRNA(Sec) selenium transferase (462 aa).

Lys292 bears the N6-(pyridoxal phosphate)lysine mark.

Belongs to the SelA family. Pyridoxal 5'-phosphate is required as a cofactor.

The protein localises to the cytoplasm. The enzyme catalyses L-seryl-tRNA(Sec) + selenophosphate + H(+) = L-selenocysteinyl-tRNA(Sec) + phosphate. Its pathway is aminoacyl-tRNA biosynthesis; selenocysteinyl-tRNA(Sec) biosynthesis; selenocysteinyl-tRNA(Sec) from L-seryl-tRNA(Sec) (bacterial route): step 1/1. Its function is as follows. Converts seryl-tRNA(Sec) to selenocysteinyl-tRNA(Sec) required for selenoprotein biosynthesis. This Clostridium perfringens (strain 13 / Type A) protein is L-seryl-tRNA(Sec) selenium transferase.